A 545-amino-acid chain; its full sequence is Hydroxylamine reductase (545 aa).

[4Fe-4S] cluster-binding residues include Cys-3, Cys-6, Cys-15, and Cys-21. Residues His-240, Glu-264, Cys-309, Cys-401, Cys-429, Cys-454, Glu-488, and Lys-490 each coordinate hybrid [4Fe-2O-2S] cluster. Cys-401 carries the post-translational modification Cysteine persulfide.

The protein belongs to the HCP family. It depends on [4Fe-4S] cluster as a cofactor. Hybrid [4Fe-2O-2S] cluster serves as cofactor.

The protein localises to the cytoplasm. It catalyses the reaction A + NH4(+) + H2O = hydroxylamine + AH2 + H(+). Catalyzes the reduction of hydroxylamine to form NH(3) and H(2)O. The protein is Hydroxylamine reductase of Rippkaea orientalis (strain PCC 8801 / RF-1) (Cyanothece sp. (strain PCC 8801)).